Here is a 1008-residue protein sequence, read N- to C-terminus: PAN2-PAN3 deadenylation complex catalytic subunit PAN2 (1008 aa).

WD repeat units lie at residues 29 to 68 (GQLTDTLPLTFDLAEDLVWAGDTNGIVSSYYGETLQPYSR), 110 to 149 (PSLGNNLCMTFTHGPTEFVVGGNPGKLVVVNSERGDVTRV), 158 to 198 (HMAG…FSDV), 200 to 236 (VQDNVVMTCGFSAASTGHRIDPLIKVWDLRMMRAMAP), and 277 to 316 (AEVALVNGVKLSPRGHHFVVSDTSGQLQLWSDEPQSSFAE). The segment at 314–449 (FAEFSAPTAF…TCTEASMSSK (136 aa)) is linker. One can recognise a USP domain in the interval 450 to 755 (KVPRLYRKLE…RTVMMVYAVG (306 aa)). The region spanning 808 to 976 (AIDAEFVVLK…EDSHTALLLY (169 aa)) is the Exonuclease domain. Aspartate 810, glutamate 812, aspartate 915, and aspartate 968 together coordinate a divalent metal cation.

This sequence belongs to the peptidase C19 family. PAN2 subfamily. As to quaternary structure, forms a heterotrimer with an asymmetric homodimer of the regulatory subunit PAN3 to form the poly(A)-nuclease (PAN) deadenylation complex. A divalent metal cation serves as cofactor.

Its subcellular location is the cytoplasm. It carries out the reaction Exonucleolytic cleavage of poly(A) to 5'-AMP.. Positively regulated by the regulatory subunit PAN3. In terms of biological role, catalytic subunit of the poly(A)-nuclease (PAN) deadenylation complex, one of two cytoplasmic mRNA deadenylases involved in mRNA turnover. PAN specifically shortens poly(A) tails of RNA and the activity is stimulated by poly(A)-binding protein PAB1. PAN deadenylation is followed by rapid degradation of the shortened mRNA tails by the CCR4-NOT complex. Deadenylated mRNAs are then degraded by two alternative mechanisms, namely exosome-mediated 3'-5' exonucleolytic degradation, or deadenylation-dependent mRNA decaping and subsequent 5'-3' exonucleolytic degradation by XRN1. May also be involved in post-transcriptional maturation of mRNA poly(A) tails. The sequence is that of PAN2-PAN3 deadenylation complex catalytic subunit PAN2 from Yarrowia lipolytica (strain CLIB 122 / E 150) (Yeast).